Reading from the N-terminus, the 179-residue chain is Large ribosomal subunit protein uL5 (179 aa).

This sequence belongs to the universal ribosomal protein uL5 family. In terms of assembly, part of the 50S ribosomal subunit; part of the 5S rRNA/L5/L18/L25 subcomplex. Contacts the 5S rRNA and the P site tRNA. Forms a bridge to the 30S subunit in the 70S ribosome.

This is one of the proteins that bind and probably mediate the attachment of the 5S RNA into the large ribosomal subunit, where it forms part of the central protuberance. In the 70S ribosome it contacts protein S13 of the 30S subunit (bridge B1b), connecting the 2 subunits; this bridge is implicated in subunit movement. Contacts the P site tRNA; the 5S rRNA and some of its associated proteins might help stabilize positioning of ribosome-bound tRNAs. The protein is Large ribosomal subunit protein uL5 of Actinobacillus pleuropneumoniae serotype 5b (strain L20).